Here is a 188-residue protein sequence, read N- to C-terminus: dTTP/UTP pyrophosphatase (188 aa).

Asp-70 serves as the catalytic Proton acceptor.

Belongs to the Maf family. YhdE subfamily. A divalent metal cation is required as a cofactor.

It is found in the cytoplasm. The enzyme catalyses dTTP + H2O = dTMP + diphosphate + H(+). The catalysed reaction is UTP + H2O = UMP + diphosphate + H(+). Its function is as follows. Nucleoside triphosphate pyrophosphatase that hydrolyzes dTTP and UTP. May have a dual role in cell division arrest and in preventing the incorporation of modified nucleotides into cellular nucleic acids. This is dTTP/UTP pyrophosphatase from Clostridium beijerinckii (strain ATCC 51743 / NCIMB 8052) (Clostridium acetobutylicum).